The primary structure comprises 702 residues: MLPASSKMPHKQPPPPRKQSISMGRGARKRDEDSGTEVGEGTDEWVQSKATVKPPDQLDLTDAELKEEFTRILTANNPHAPQNIVRYSFKEGTYKLIGFVDQLAVHFTQVGNLIPKDSDEGRRQHYRDELAASSQESAKVVISETEILEEEEEPKEVEAGSQTDVPIVEASEKMAEEELMTPKQPKERKLTNKFNFSERASQTFNNPLRDRECQMEPPPRTNFSATANQWEIYDAYMEELEKQEKTKEKEKTKTPVAKKMGKMAMRKMTSMESQSDDITKVTQAAKIVERMVNQNTYDDVAQDFKYYEDAADEYRDQEGTLLPLWKFQNDKAKRLAVTALCWNPKYNDLFAVGHGSYDFMKQSRGMLLLYSMKNPSFPEYIFSSESGIMCLDMHVDHPYLVVVGHYDGNVAIYNLKKPHSQPSFRSSAKSGKHTDPVWQVRWQKDDMDHNLNFFSVSSDGRIVSWTLVKSELVHTDVIKLKVEGSTTEGLEGLQIHTVGCGTAFDFHREIDYLFLVGTEEGKIYKCSKSYSSQFLDTYDAHNMAVDAVSWNPYHTKVFMSCSSDWTVKIWDHTIKTPMFIYDLNSAVGDVAWAPYSSTVFAAVTTNGKTHVFDLSINKYEAICNQPVVAKKKNKLTHVQFNPIHPIIIVGDDRGHVTCLKLSPNLRKMPKEKKGQEVQKGPAVEIAKLDKLLNLVREVKTKT.

A disordered region spans residues 1 to 58; that stretch reads MLPASSKMPHKQPPPPRKQSISMGRGARKRDEDSGTEVGEGTDEWVQSKATVKPPDQL. 2 positions are modified to phosphoserine: S134 and S137. 5 WD repeats span residues 383 to 423, 432 to 475, 540 to 580, 582 to 622, and 630 to 669; these read SSES…SQPS, KHTD…LVHT, AHNM…PMFI, DLNS…YEAI, and KKKN…RKMP.

This sequence belongs to the dynein intermediate chain family. As to quaternary structure, consists of at least two heavy chains and a number of intermediate and light chains. Interacts with BICD2. Interacts with CFAP45 and CFAP52. Interacts with CFAP53.

The protein localises to the cytoplasm. Its subcellular location is the cytoskeleton. The protein resides in the cilium axoneme. Part of the dynein complex of respiratory cilia. This is Dynein axonemal intermediate chain 1 (DNAI1) from Bos taurus (Bovine).